The following is a 472-amino-acid chain: H(+)/Cl(-) exchange transporter ClcA (472 aa).

At Met1–Pro32 the chain is on the cytoplasmic side. Residues Leu33 to Ala69 form a helical membrane-spanning segment. Residues Gln70–Tyr76 lie on the Periplasmic side of the membrane. The helical transmembrane segment at Leu77–Phe100 threads the bilayer. Positions Gly106–Pro110 match the Selectivity filter part_1 motif. Ser107 provides a ligand contact to chloride. Residues Ile109 to Leu116 constitute an intramembrane region (helical). Residues Glu117–Arg123 lie on the Cytoplasmic side of the membrane. The next 2 helical transmembrane spans lie at Trp124–Ala141 and Glu148–Phe166. The short motif at Gly146 to Pro150 is the Selectivity filter part_2 element. Over Arg167–Thr176 the chain is Cytoplasmic. Intramembrane regions (helical) lie at residues Leu177 to Ala189 and Pro193 to Ile201. The Cytoplasmic segment spans residues Glu202–Ser214. The helical transmembrane segment at Ile215–Phe232 threads the bilayer. Topologically, residues Asn233 to Leu252 are periplasmic. Residues Trp253 to Gln281 form a helical membrane-spanning segment. The Cytoplasmic segment spans residues Arg282–Asn287. The chain crosses the membrane as a helical span at residues Ile288 to Gln309. Residues Pro310–Ser329 are Periplasmic-facing. Helical transmembrane passes span Val330–Ser349 and Gly355–Ile376. Residues Gly355–Pro359 carry the Selectivity filter part_3 motif. Residues Ile356 and Phe357 each coordinate chloride. Over Pro377–Ala386 the chain is Periplasmic. The segment at residues Gly387–Ser401 is an intramembrane region (helical). Residues Val402–Ala404 constitute an intramembrane region (note=Loop between two helices). Positions Pro405–Thr416 form an intramembrane region, helical. The note=Loop between two helices intramembrane region spans Asp417 to Leu421. A helical membrane pass occupies residues Ile422 to Phe438. The Cytoplasmic segment spans residues Leu439–Thr472. Chloride is bound at residue Tyr445.

This sequence belongs to the chloride channel (TC 2.A.49) family. ClcA subfamily. In terms of assembly, homodimer.

The protein localises to the cell inner membrane. It catalyses the reaction 2 chloride(in) + H(+)(out) = 2 chloride(out) + H(+)(in). Proton-coupled chloride transporter. Functions as antiport system and exchanges two chloride ions for 1 proton. Probably acts as an electrical shunt for an outwardly-directed proton pump that is linked to amino acid decarboxylation, as part of the extreme acid resistance (XAR) response. This Klebsiella pneumoniae (strain 342) protein is H(+)/Cl(-) exchange transporter ClcA.